The primary structure comprises 202 residues: Putative zinc finger protein ZK686.5 (202 aa).

The segment at 43–63 is disordered; the sequence is RKNVDNTSTRKPYSYKDRKRK. 3 consecutive C2H2-type zinc fingers follow at residues 110-133, 138-160, and 169-192; these read TYCE…GKVH, IECH…MKTH, and VQCE…DVSH.

It is found in the nucleus. This chain is Putative zinc finger protein ZK686.5, found in Caenorhabditis elegans.